Here is a 66-residue protein sequence, read N- to C-terminus: uncharacterized protein (66 aa).

2 consecutive transmembrane segments (helical) span residues 3–23 and 34–54; these read LIHVLAALPFIGILLGIPFAN and FILAYIVMWALLTSALMAIVY.

It localises to the cell membrane. This is an uncharacterized protein from Bacillus subtilis (strain 168).